The primary structure comprises 401 residues: Elongation factor Tu 1 (401 aa).

Residues 10–209 form the tr-type G domain; sequence KPHVNVGTIG…AVDEYIPTPV (200 aa). The G1 stretch occupies residues 19 to 26; that stretch reads GHVDHGKT. 19 to 26 is a GTP binding site; the sequence is GHVDHGKT. Thr26 lines the Mg(2+) pocket. The segment at 60–64 is G2; sequence GITIA. Residues 81-84 form a G3 region; it reads DCPG. Residues 81-85 and 136-139 contribute to the GTP site; these read DCPGH and NKVD. Residues 136-139 are G4; it reads NKVD. Positions 174-176 are G5; the sequence is SAL.

The protein belongs to the TRAFAC class translation factor GTPase superfamily. Classic translation factor GTPase family. EF-Tu/EF-1A subfamily. As to quaternary structure, monomer.

It localises to the cytoplasm. The catalysed reaction is GTP + H2O = GDP + phosphate + H(+). GTP hydrolase that promotes the GTP-dependent binding of aminoacyl-tRNA to the A-site of ribosomes during protein biosynthesis. The polypeptide is Elongation factor Tu 1 (Roseiflexus castenholzii (strain DSM 13941 / HLO8)).